A 175-amino-acid chain; its full sequence is Endothelin-2 (175 aa).

An N-terminal signal peptide occupies residues methionine 1–glycine 21. A propeptide spanning residues glutamine 22–phenylalanine 43 is cleaved from the precursor. 2 disulfide bridges follow: cysteine 46-cysteine 60 and cysteine 48-cysteine 56. A propeptide spanning residues valine 67 to arginine 175 is cleaved from the precursor. An endothelin-like region spans residues cysteine 93 to histidine 108.

This sequence belongs to the endothelin/sarafotoxin family.

It localises to the secreted. Vasoconstrictor. In Mus musculus (Mouse), this protein is Endothelin-2 (Edn2).